Consider the following 775-residue polypeptide: Thiamine repressible genes regulatory protein thi1 (775 aa).

The zn(2)-C6 fungal-type DNA-binding region spans 39–65; the sequence is CKHCRQKKIKCNGGQPCISCKTLNIEC. Ser-208 carries the post-translational modification Phosphoserine. Disordered regions lie at residues 676–695 and 754–775; these read LTGE…FQPF and NVSE…EKNG.

The protein localises to the nucleus. Functionally, transcription factor that activates the nmt1 promoter. Regulation of thiamine repressible genes. Positively regulates conjugation during meiosis. The chain is Thiamine repressible genes regulatory protein thi1 (thi1) from Schizosaccharomyces pombe (strain 972 / ATCC 24843) (Fission yeast).